The primary structure comprises 419 residues: BTB/POZ domain-containing protein KCTD20 (419 aa).

A BTB domain is found at 117–191 (EKVTLLVDGT…YKTGIINCPD (75 aa)).

As to quaternary structure, interacts with AKT1; AKT2 and AKT3. Interacts with PPP2CA and PPP1CA. Part of a complex containing MARK4. Ubiquitously expressed.

The protein localises to the cytoplasm. In terms of biological role, promotes the phosphorylation of AKT family members. The protein is BTB/POZ domain-containing protein KCTD20 (Kctd20) of Mus musculus (Mouse).